The chain runs to 94 residues: Co-chaperonin GroES (94 aa).

Belongs to the GroES chaperonin family. As to quaternary structure, heptamer of 7 subunits arranged in a ring. Interacts with the chaperonin GroEL.

It localises to the cytoplasm. In terms of biological role, together with the chaperonin GroEL, plays an essential role in assisting protein folding. The GroEL-GroES system forms a nano-cage that allows encapsulation of the non-native substrate proteins and provides a physical environment optimized to promote and accelerate protein folding. GroES binds to the apical surface of the GroEL ring, thereby capping the opening of the GroEL channel. The protein is Co-chaperonin GroES of Latilactobacillus sakei subsp. sakei (strain 23K) (Lactobacillus sakei subsp. sakei).